The chain runs to 329 residues: Flotillin-like protein FloA (329 aa).

2 consecutive transmembrane segments (helical) span residues 5–25 and 27–47; these read IFLL…LSFI and LGLW…TLVG.

This sequence belongs to the flotillin-like FloA family. Homooligomerizes.

The protein localises to the cell membrane. It localises to the membrane raft. Functionally, found in functional membrane microdomains (FMM) that may be equivalent to eukaryotic membrane rafts. FMMs are highly dynamic and increase in number as cells age. Flotillins are thought to be important factors in membrane fluidity. The polypeptide is Flotillin-like protein FloA (Thermoanaerobacter sp. (strain X514)).